Reading from the N-terminus, the 463-residue chain is Type II NADH:quinone oxidoreductase Ndh (463 aa).

Residues 21 to 25 and valine 89 contribute to the FAD site; that span reads GSGFG. The active site involves glutamate 184. Residues aspartate 322 and 333-334 each bind FAD; that span reads AQ. The helical transmembrane segment at 387-407 threads the bilayer; sequence FSGFIAWLIWLVLHLAYLIGF.

The protein belongs to the NADH dehydrogenase family. FAD serves as cofactor.

It localises to the cell inner membrane. The catalysed reaction is a quinone + NADH + H(+) = a quinol + NAD(+). The enzyme catalyses a menaquinone + NADH + H(+) = a menaquinol + NAD(+). It carries out the reaction a ubiquinone + NADH + H(+) = a ubiquinol + NAD(+). Its activity is regulated as follows. Inhibited by phenothiazine analogs. Inhibited by 2-mercapto-quinazolinones. Not inhibited by classic inhibitors of type I NADH dehydrogenase, such as rotenone, piericidin A and pyridaben. Alternative, nonproton pumping NADH:quinone oxidoreductase that delivers electrons to the respiratory chain by oxidation of NADH and reduction of quinones. Ndh is probably the main NADH dehydrogenase of M.tuberculosis. The sequence is that of Type II NADH:quinone oxidoreductase Ndh from Mycobacterium tuberculosis (strain ATCC 25618 / H37Rv).